The primary structure comprises 252 residues: MDKRLWVGVVSIFPEMFRAISDYGITSRAVKQGLLTLTCWNPRVYTEDRHQTVDDRPFGGGPGMVMKIKPLEGALADARQAAGGRKAKVIYLSPQGRQLTQAGVRELAEEEALILIAGRYEGIDERFIEEHVDEEWSIGDYVLSGGELPAMVLVDAVTRLLPGALGHADSAEEDSFTDGLLDCPHYTRPEVYADKRVPEVLLSGNHEHIRRWRLQQALGRTWERRADLLDSRSLSGEEQKLLAEYIRQRDDS.

Residues glycine 118 and isoleucine 138–leucine 143 contribute to the S-adenosyl-L-methionine site.

Belongs to the RNA methyltransferase TrmD family. As to quaternary structure, homodimer.

The protein resides in the cytoplasm. It carries out the reaction guanosine(37) in tRNA + S-adenosyl-L-methionine = N(1)-methylguanosine(37) in tRNA + S-adenosyl-L-homocysteine + H(+). Functionally, specifically methylates guanosine-37 in various tRNAs. This chain is tRNA (guanine-N(1)-)-methyltransferase, found in Pseudomonas aeruginosa (strain UCBPP-PA14).